Reading from the N-terminus, the 253-residue chain is Triosephosphate isomerase (253 aa).

9 to 11 (NWK) is a substrate binding site. Histidine 94 serves as the catalytic Electrophile. Glutamate 163 functions as the Proton acceptor in the catalytic mechanism. Substrate-binding positions include glycine 169, serine 209, and 230-231 (GG).

Belongs to the triosephosphate isomerase family. Homodimer.

Its subcellular location is the cytoplasm. The enzyme catalyses D-glyceraldehyde 3-phosphate = dihydroxyacetone phosphate. The protein operates within carbohydrate biosynthesis; gluconeogenesis. It participates in carbohydrate degradation; glycolysis; D-glyceraldehyde 3-phosphate from glycerone phosphate: step 1/1. In terms of biological role, involved in the gluconeogenesis. Catalyzes stereospecifically the conversion of dihydroxyacetone phosphate (DHAP) to D-glyceraldehyde-3-phosphate (G3P). The sequence is that of Triosephosphate isomerase from Dehalococcoides mccartyi (strain ATCC BAA-2100 / JCM 16839 / KCTC 5957 / BAV1).